The primary structure comprises 95 residues: UPF0235 protein Swoo_1329 (95 aa).

Belongs to the UPF0235 family.

The protein is UPF0235 protein Swoo_1329 of Shewanella woodyi (strain ATCC 51908 / MS32).